The chain runs to 360 residues: MQLESLSTLNYRNLAPCTLSFPAGVTGVFGENGAGKTNLLEAAYLALTGLTDVTRLEQLVQSGEGEAYVRADLESGGSLSIQEVGLGRGRRQLKVDGVRVRAGDLPRGSAVWIRPEDSELVFGSPSGRRNFLDALLSRLSARYAQQLARYDRTVSQRNAALRSGEEWAMHVWDDALVKLGSDIMLFRRRALTRLSELAAEANEALGSRKPLVLGLSESTTPETYAHDLRSRRAEELARGSTATGPHRDDLTMTLGDFPATEYASRGEGRTIALALRRAELELLAERFGEKPVLLIDDFSAELDPTRRAFLLDLAASVPQAIVTGTEQAPGAALTLRAHAGRFTPEPEPVSAQVAVDEVGA.

30–37 (GENGAGKT) is an ATP binding site.

It belongs to the RecF family.

The protein localises to the cytoplasm. Functionally, the RecF protein is involved in DNA metabolism; it is required for DNA replication and normal SOS inducibility. RecF binds preferentially to single-stranded, linear DNA. It also seems to bind ATP. The chain is DNA replication and repair protein RecF from Deinococcus deserti (strain DSM 17065 / CIP 109153 / LMG 22923 / VCD115).